Here is a 154-residue protein sequence, read N- to C-terminus: Aspartate carbamoyltransferase regulatory chain (154 aa).

Residues cysteine 109, cysteine 114, cysteine 138, and cysteine 141 each coordinate Zn(2+).

Belongs to the PyrI family. As to quaternary structure, contains catalytic and regulatory chains. Requires Zn(2+) as cofactor.

In terms of biological role, involved in allosteric regulation of aspartate carbamoyltransferase. In Yersinia pseudotuberculosis serotype O:1b (strain IP 31758), this protein is Aspartate carbamoyltransferase regulatory chain.